A 254-amino-acid polypeptide reads, in one-letter code: Glycerol operon regulatory protein (254 aa).

The 63-residue stretch at 5-67 (IQSLERAAAM…DASGRYQLGA (63 aa)) folds into the HTH iclR-type domain. The segment at residues 27-46 (LSDIASSLGLAKGTAHGILR) is a DNA-binding region (H-T-H motif). The 170-residue stretch at 82 to 251 (LRARALVWTD…ARAVSRDLGA (170 aa)) folds into the IclR-ED domain.

In terms of biological role, may be an activator protein for the gylABX operon. The polypeptide is Glycerol operon regulatory protein (gylR) (Streptomyces coelicolor (strain ATCC BAA-471 / A3(2) / M145)).